The sequence spans 613 residues: Phostensin (613 aa).

Residues 18–33 (EEASVRGREKAERERL) show a composition bias toward basic and acidic residues. Disordered stretches follow at residues 18–231 (EEAS…SAYQ) and 266–500 (GEER…AVPG). Phosphoserine is present on residues Ser54, Ser125, Ser133, Ser175, and Ser195. Basic and acidic residues-rich tracts occupy residues 104–154 (RSEE…ERRL) and 167–191 (LEAR…EAWK). Position 199 is a phosphothreonine (Thr199). Over residues 199 to 221 (TPERSLRLAESREQSPRRKEVES) the composition is skewed to basic and acidic residues. Ser224 carries the post-translational modification Phosphoserine. Positions 266–282 (GEERQDYSEECGRKEEW) are enriched in basic and acidic residues. The segment covering 295–309 (LSETLTREAQGNSSA) has biased composition (polar residues). Basic and acidic residues-rich tracts occupy residues 314 to 327 (AEQR…RGMK), 340 to 350 (KAREWTPRDIE), and 357 to 366 (EPPESAEKLL). Phosphoserine occurs at positions 368 and 432. Over residues 424–446 (QPPPPAPLSPPPPAPTAPQPPGD) the composition is skewed to pro residues. At Lys457 the chain carries N6-acetyllysine. Low complexity predominate over residues 476–499 (PRRSVPPATPATPTSPATVDAAVP). Residues Ser490 and Ser530 each carry the phosphoserine modification. Residues 552-595 (QYPSESSVLEELGPEPEVPSAPNPPAAQPDDEEDEEELLLLQPE) form a disordered region. Residues 567–578 (PEVPSAPNPPAA) show a composition bias toward pro residues. Acidic residues predominate over residues 580-589 (PDDEEDEEEL).

As to quaternary structure, interacts with Protein phosphatase 1 (PP1). As to expression, isoform 4 is predominantly expressed in leukocytes and spleen.

The protein localises to the cytoplasm. Its subcellular location is the cytoskeleton. May target protein phosphatase 1 to F-actin cytoskeleton. This chain is Phostensin (PPP1R18), found in Homo sapiens (Human).